The sequence spans 81 residues: Putative membrane protein insertion efficiency factor (81 aa).

The tract at residues 60 to 81 (WNPGGYDPVPTHNTSNSSPMAE) is disordered. The span at 70–81 (THNTSNSSPMAE) shows a compositional bias: polar residues.

It belongs to the UPF0161 family.

It localises to the cell inner membrane. Its function is as follows. Could be involved in insertion of integral membrane proteins into the membrane. The polypeptide is Putative membrane protein insertion efficiency factor (Stutzerimonas stutzeri (strain A1501) (Pseudomonas stutzeri)).